Consider the following 198-residue polypeptide: Syndecan-4 (198 aa).

An N-terminal signal peptide occupies residues 1–18 (MAPARLFALLLFFVGGVA). Residues 19-145 (ESIRETEVID…QGSNIFERTE (127 aa)) lie on the Extracellular side of the membrane. Ser39, Ser61, and Ser63 each carry an O-linked (Xyl...) (glycosaminoglycan) serine glycan. A glycan (O-linked (Xyl...) (chondroitin sulfate) serine) is linked at Ser95. A helical membrane pass occupies residues 146–170 (VLAALIVGGIVGILFAVFLILLLMY). At 171 to 198 (RMKKKDEGSYDLGKKPIYKKAPTNEFYA) the chain is on the cytoplasmic side.

This sequence belongs to the syndecan proteoglycan family. In terms of assembly, homodimer. Interacts (via its cytoplasmic domain) with GIPC (via its PDZ domain). Interacts (via its cytoplasmic domain) with NUDT16L1. Interacts with CDCP1 and SDCBP. Interacts with DNM2; this interaction is markedly enhanced at focal ahesion site upon induction of focal adhesions and stress-fiber formation. In terms of processing, shedding is enhanced by a number of factors such as heparanase, thrombin or EGF. Also by stress and wound healing. PMA-mediated shedding is inhibited by TIMP3. Post-translationally, O-glycosylated; contains both chondroitin sulfate and heparan sulfate. Ser-39, Ser-61 and Ser-63 can all be modified by either chondroitin sulfate or heparan sulfate, and the protein exists in forms that contain only chondroitin sulfate, only heparan sulfate and both chondroitin sulfate and heparan sulfate. In terms of tissue distribution, detected in fibroblasts (at protein level). Also expressed in epithelial cells.

The protein resides in the membrane. It localises to the secreted. Functionally, cell surface proteoglycan which regulates exosome biogenesis in concert with SDCBP and PDCD6IP. This is Syndecan-4 from Homo sapiens (Human).